We begin with the raw amino-acid sequence, 142 residues long: Large ribosomal subunit protein uL13 (142 aa).

The protein belongs to the universal ribosomal protein uL13 family. In terms of assembly, part of the 50S ribosomal subunit.

In terms of biological role, this protein is one of the early assembly proteins of the 50S ribosomal subunit, although it is not seen to bind rRNA by itself. It is important during the early stages of 50S assembly. This chain is Large ribosomal subunit protein uL13, found in Geobacter sp. (strain M21).